Here is a 246-residue protein sequence, read N- to C-terminus: tRNA pseudouridine synthase A (246 aa).

Asp52 acts as the Nucleophile in catalysis. Position 110 (Tyr110) interacts with substrate.

This sequence belongs to the tRNA pseudouridine synthase TruA family. Homodimer.

The enzyme catalyses uridine(38/39/40) in tRNA = pseudouridine(38/39/40) in tRNA. Its function is as follows. Formation of pseudouridine at positions 38, 39 and 40 in the anticodon stem and loop of transfer RNAs. The chain is tRNA pseudouridine synthase A from Exiguobacterium sp. (strain ATCC BAA-1283 / AT1b).